Consider the following 20-residue polypeptide: NLLQFGYMIRCANGRSRPVW.

Heterotrimer of alpha, beta, and gamma chains; non-covalently linked. Ca(2+) serves as cofactor. Expressed by the venom gland.

The protein resides in the secreted. The catalysed reaction is a 1,2-diacyl-sn-glycero-3-phosphocholine + H2O = a 1-acyl-sn-glycero-3-phosphocholine + a fatty acid + H(+). In terms of biological role, heterotrimer: Snake venom phospholipase A2 (PLA2) heterotrimer that acts as a potent presynaptic neurotoxin by blocking synaptic transmission and synaptic vesicle recycling. Enzymatic activity is essential for the neurotoxic effects. May act by binding in a calcium-dependent fashion to neurotonal pentraxin-1 (NPTX1) and neurotonal pentraxin-2 (NPTX2), but not to neuronal pentraxin receptor (NPTXR). Also binds to taipoxin-associated calcium binding protein 49 (RCN2), a protein localized in the lumen of endoplasmic reticulum. Its function is as follows. Monomer (alpha chain): Snake venom phospholipase A2 (PLA2) that possesses a low level of presynaptic activity and the same high enzymatic activity than the heterotrimer. PLA2 catalyzes the calcium-dependent hydrolysis of the 2-acyl groups in 3-sn-phosphoglycerides. The protein is Basic phospholipase A2 cannitoxin alpha chain of Oxyuranus scutellatus canni (Papuan taipan).